Reading from the N-terminus, the 468-residue chain is Interleukin-6 receptor subunit alpha (468 aa).

An N-terminal signal peptide occupies residues 1–19; it reads MLAVGCALLAALLAAPGAA. The Extracellular segment spans residues 20-365; the sequence is LAPRRCPAQE…VQDSSSVPLP (346 aa). Cystine bridges form between cysteine 25/cysteine 193, cysteine 47/cysteine 96, cysteine 121/cysteine 132, and cysteine 165/cysteine 176. The region spanning 26 to 112 is the Ig-like C2-type domain; it reads PAQEVARGVL…AGTVHLLVDV (87 aa). Residues asparagine 55 and asparagine 93 are each glycosylated (N-linked (GlcNAc...) asparagine). 2 consecutive Fibronectin type-III domains span residues 113–217 and 218–316; these read PPEE…LQPD and PPAN…TPWT. Asparagine 221 and asparagine 245 each carry an N-linked (GlcNAc...) asparagine glycan. A WSXWS motif motif is present at residues 303-307; sequence WSEWS. Residues 303-328 form a disordered region; that stretch reads WSEWSPEAMGTPWTESRSPPAENEVS. Residue asparagine 350 is glycosylated (N-linked (GlcNAc...) asparagine). Threonine 352 is a glycosylation site (O-linked (GlcNAc) threonine). A helical transmembrane segment spans residues 366–386; it reads TFLVAGGSLAFGTLLCIAIVL. Residues 387-468 are Cytoplasmic-facing; that stretch reads RFKKTWKLRA…ISNTDYFFPR (82 aa). A compositionally biased stretch (pro residues) spans 421–433; sequence TPVLVPLISPPVS. Positions 421–468 are disordered; that stretch reads TPVLVPLISPPVSPSSLGSDNTSSHNRPDARDPRSPYDISNTDYFFPR. Basic and acidic residues predominate over residues 446 to 455; it reads NRPDARDPRS. Positions 458 to 468 are enriched in polar residues; it reads DISNTDYFFPR.

The protein belongs to the type I cytokine receptor family. Type 3 subfamily. As to quaternary structure, component of a hexamer of two molecules each of IL6, IL6R and IL6ST; first binds to IL6 to associate with the signaling subunit IL6ST. Interacts (via N-terminal ectodomain) with SORL1; this interaction may affect IL6-binding to IL6R, hence decrease IL6 'classic-signaling'. In terms of assembly, also interacts with SORL1; this interaction leads to soluble IL6R internalization. May form a trimeric complex with the soluble SORL1 ectodomain and circulating IL6 receptor; this interaction might stabilize circulating IL6, hence promote IL6 'trans-signaling,. Post-translationally, a short soluble form is released from the membrane by proteolysis. The sIL6R is formed mostly by limited proteolysis of membrane-bound receptors, a process referred to as ectodomain shedding, but is also directly secreted from the cells after alternative mRNA splicing. mIL6R is cleaved by the proteases ADAM10 and ADAM17. Glycosylated. Glycosylation is dispensable for transport, signaling, and cell-surface turnover. Glycosylation at Asn-55 is a protease-regulatory exosite. Glycosylation is required for ADAM17-mediated proteolysis. Expressed in peripheral blood mononuclear cells and weakly found in urine and serum. 1%-20% of the total sIL6R in plasma is generated by alternative splicing.

It localises to the cell membrane. It is found in the secreted. With respect to regulation, classic and trans-signaling are both inhibited by tocilizumab, a humanized monoclonal antibody that blocks interleukin IL6R signaling. Functionally, part of the receptor for interleukin 6. Binds to IL6 with low affinity, but does not transduce a signal. Signal activation necessitate an association with IL6ST. Activation leads to the regulation of the immune response, acute-phase reactions and hematopoiesis. The interaction with membrane-bound IL6R and IL6ST stimulates 'classic signaling', the restricted expression of the IL6R limits classic IL6 signaling to only a few tissues such as the liver and some cells of the immune system. Whereas the binding of IL6 and soluble IL6R to IL6ST stimulates 'trans-signaling'. Alternatively, 'cluster signaling' occurs when membrane-bound IL6:IL6R complexes on transmitter cells activate IL6ST receptors on neighboring receiver cells. Signaling via the membrane-bound IL6R is mostly regenerative and anti-inflammatory. Drives naive CD4(+) T cells to the Th17 lineage, through 'cluster signaling' by dendritic cells. In terms of biological role, soluble form of IL6 receptor (sIL6R) that acts as an agonist of IL6 activity. The IL6:sIL6R complex (hyper-IL6) binds to IL6ST/gp130 on cell surfaces and induces signaling also on cells that do not express membrane-bound IL6R in a process called IL6 'trans-signaling'. sIL6R is causative for the pro-inflammatory properties of IL6 and an important player in the development of chronic inflammatory diseases. In complex with IL6, is required for induction of VEGF production. Plays a protective role during liver injury, being required for maintenance of tissue regeneration. 'Trans-signaling' in central nervous system regulates energy and glucose homeostasis. The protein is Interleukin-6 receptor subunit alpha of Homo sapiens (Human).